We begin with the raw amino-acid sequence, 413 residues long: ORC1-type DNA replication protein 2 (413 aa).

ATP-binding positions include threonine 70 to alanine 74, tyrosine 217, and arginine 229.

Belongs to the CDC6/cdc18 family. As to quaternary structure, monomer. Interacts with Cdc6-3, MCM and PolB1. Post-translationally, autophosphorylated in vitro.

Its function is as follows. Involved in regulation of DNA replication. May play essential roles in origin recognition and cell cycle control of replication. Binds both single-stranded and double-stranded DNA, with a preference for molecules that contain a bubble, a fork, or a tail. Has a weak ATPase activity. Stimulates the binding of the MCM helicase to the origin DNA, but strongly inhibits ATPase and DNA helicase activities of MCM. Also regulates the DNA polymerase and the nuclease activities of PolB1. The sequence is that of ORC1-type DNA replication protein 2 (cdc6-2) from Saccharolobus solfataricus (strain ATCC 35092 / DSM 1617 / JCM 11322 / P2) (Sulfolobus solfataricus).